A 124-amino-acid polypeptide reads, in one-letter code: Large ribosomal subunit protein uL29 (124 aa).

This sequence belongs to the universal ribosomal protein uL29 family.

This is Large ribosomal subunit protein uL29 (RPL35) from Triticum aestivum (Wheat).